Here is a 77-residue protein sequence, read N- to C-terminus: Defensin-like protein 161 (77 aa).

An N-terminal signal peptide occupies residues 1 to 27; it reads MAKLSCSYLLVFMLVFSAILMVEKVEG. Cystine bridges form between Cys30-Cys77, Cys40-Cys59, Cys45-Cys71, and Cys49-Cys73.

Belongs to the DEFL family.

It is found in the secreted. This Arabidopsis thaliana (Mouse-ear cress) protein is Defensin-like protein 161 (LCR27).